We begin with the raw amino-acid sequence, 466 residues long: Acetylcholine-gated chloride channel subunit acc-1 (466 aa).

The N-terminal stretch at 1 to 24 is a signal peptide; that stretch reads MSHPGWIMVSFLTELLSQSSKGIA. The Extracellular segment spans residues 25–242; sequence QSLDNCANDT…FVFERRYGWY (218 aa). N-linked (GlcNAc...) asparagine glycosylation is found at asparagine 32, asparagine 102, and asparagine 143. A disulfide bond links cysteine 158 and cysteine 172. A glycan (N-linked (GlcNAc...) asparagine) is linked at asparagine 211. The chain crosses the membrane as a helical span at residues 243–263; the sequence is VLQGYIPTMVTIVISWISFYL. Over 264 to 272 the chain is Cytoplasmic; it reads GPRAIPART. Residues 273–290 traverse the membrane as a helical segment; it reads MLGVNSLLAMTFQFGNII. Residues 291 to 304 lie on the Extracellular side of the membrane; it reads RNLPRVSYVKAIDV. Residues 305 to 325 form a helical membrane-spanning segment; sequence WMLSGMLFIFLSLLELAVVGF. Topologically, residues 326–427 are cytoplasmic; the sequence is MSRNEGLPPK…MRELRPETVD (102 aa). Residues 333-352 are disordered; that stretch reads PPKVKKRKRQEDDDEGFSWK. Residues 428 to 448 form a helical membrane-spanning segment; that stretch reads FYSAIFFPTAYMLFNISYWSF. The Extracellular portion of the chain corresponds to 449 to 466; that stretch reads YLTSLSEYFDEDVNIDQP.

This sequence belongs to the ligand-gated ion channel (TC 1.A.9) family. In terms of assembly, homopentamer (in vitro). Forms heteropentamers composed of acc-1 and acc-4 or acc-1 and acc-3. Both homopentamers and heteropentamers form functional ion channels. In terms of tissue distribution, expressed in a subset of cholinergic motor neurons including cholinergic motor neurons in the ventral cord, the retrovesicular ganglion and in head neurons such as the SMD, RMD motor neurons, the AVA and AVE command interneurons and the SAA neurons. Also expressed in a small number of glutamatergic neurons including the pharyngeal neurons MI and M3, the PLM neurons and a pair of neurons in the lateral ganglion.

Its subcellular location is the cell membrane. Its function is as follows. Acetylcholine-gated chloride channel subunit. Forms functional homopentameric (in vitro) and functional heteropentameric ion channels with acc-3 and acc-4 ion channel subunits. Currents in channels are triggered in response to acetylcholine, but not in response to GABA, glutamate, glycine, histamine or dopamine. This is Acetylcholine-gated chloride channel subunit acc-1 from Caenorhabditis elegans.